A 554-amino-acid polypeptide reads, in one-letter code: Dihydroxy-acid dehydratase (554 aa).

Position 78 (Asp-78) interacts with Mg(2+). A [2Fe-2S] cluster-binding site is contributed by Cys-119. The Mg(2+) site is built by Asp-120 and Lys-121. Lys-121 bears the N6-carboxylysine mark. Cys-192 lines the [2Fe-2S] cluster pocket. Glu-443 serves as a coordination point for Mg(2+). The Proton acceptor role is filled by Ser-469.

It belongs to the IlvD/Edd family. In terms of assembly, homodimer. It depends on [2Fe-2S] cluster as a cofactor. Requires Mg(2+) as cofactor.

It carries out the reaction (2R)-2,3-dihydroxy-3-methylbutanoate = 3-methyl-2-oxobutanoate + H2O. The enzyme catalyses (2R,3R)-2,3-dihydroxy-3-methylpentanoate = (S)-3-methyl-2-oxopentanoate + H2O. It functions in the pathway amino-acid biosynthesis; L-isoleucine biosynthesis; L-isoleucine from 2-oxobutanoate: step 3/4. The protein operates within amino-acid biosynthesis; L-valine biosynthesis; L-valine from pyruvate: step 3/4. Functionally, functions in the biosynthesis of branched-chain amino acids. Catalyzes the dehydration of (2R,3R)-2,3-dihydroxy-3-methylpentanoate (2,3-dihydroxy-3-methylvalerate) into 2-oxo-3-methylpentanoate (2-oxo-3-methylvalerate) and of (2R)-2,3-dihydroxy-3-methylbutanoate (2,3-dihydroxyisovalerate) into 2-oxo-3-methylbutanoate (2-oxoisovalerate), the penultimate precursor to L-isoleucine and L-valine, respectively. The polypeptide is Dihydroxy-acid dehydratase (Shouchella clausii (strain KSM-K16) (Alkalihalobacillus clausii)).